Consider the following 371-residue polypeptide: Phosphate acyltransferase (371 aa).

This sequence belongs to the PlsX family. In terms of assembly, homodimer. Probably interacts with PlsY.

It is found in the cytoplasm. The enzyme catalyses a fatty acyl-[ACP] + phosphate = an acyl phosphate + holo-[ACP]. Its pathway is lipid metabolism; phospholipid metabolism. Catalyzes the reversible formation of acyl-phosphate (acyl-PO(4)) from acyl-[acyl-carrier-protein] (acyl-ACP). This enzyme utilizes acyl-ACP as fatty acyl donor, but not acyl-CoA. This is Phosphate acyltransferase from Polaromonas sp. (strain JS666 / ATCC BAA-500).